Here is a 2210-residue protein sequence, read N- to C-terminus: Mediator of RNA polymerase II transcription subunit 13-like (2210 aa).

Polar residues predominate over residues 391 to 400 (SKRSQMSTPT). Disordered stretches follow at residues 391 to 414 (SKRSQMSTPTLEEEPASNPATWDF), 435 to 489 (AVGP…PFHH), and 519 to 582 (VSSS…NPAL). Residues 445-458 (SQPGFSAGPSSSSS) are compositionally biased toward low complexity. Residues 468-480 (KTAERQEKGDKLQ) show a composition bias toward basic and acidic residues. The segment covering 533 to 544 (SRNTSKQMNLNP) has biased composition (polar residues). The segment covering 551–560 (PISPLPPTLS) has biased composition (pro residues). Serine 553 and serine 560 each carry phosphoserine. Residues 669–673 (LQRLL) carry the LXXLL motif 1 motif. Residues 736-752 (GTEKDSLKKNKSEDGFG) show a composition bias toward basic and acidic residues. The interval 736 to 770 (GTEKDSLKKNKSEDGFGTKDVTTPGHSTPVPDGKN) is disordered. Serine 817, serine 826, and serine 923 each carry phosphoserine. The segment at 1016–1096 (PQMNTPVTLN…STTRPLNSVE (81 aa)) is disordered. Low complexity predominate over residues 1025–1036 (NSAAPASNSGAG). Positions 1077 to 1092 (TDQGSPASTPSTTRPL) are enriched in polar residues. The short motif at 1225–1229 (LLLLL) is the LXXLL motif 2 element. Residues 1380–1401 (LPIPTLLVGYDKDFLTISPFSL) are leucine-zipper. Disordered regions lie at residues 1530–1656 (QTPP…VTER) and 2045–2080 (GNLHSSPNSSPVPSPGSPSGIGVGSHFQHSRSQGER). A compositionally biased stretch (low complexity) spans 1531–1608 (TPPAAAQGQA…ISTTSSSGFS (78 aa)). Over residues 1615–1629 (NPSTGGISADRTQGN) the composition is skewed to polar residues. Positions 1637 to 1650 (DPGQSSSQPSQDGQ) are enriched in low complexity. Serine 2083 bears the Phosphoserine mark.

This sequence belongs to the Mediator complex subunit 13 family. In terms of assembly, component of the Mediator complex, which is composed of MED1, MED4, MED6, MED7, MED8, MED9, MED10, MED11, MED12, MED13, MED13L, MED14, MED15, MED16, MED17, MED18, MED19, MED20, MED21, MED22, MED23, MED24, MED25, MED26, MED27, MED29, MED30, MED31, CCNC, CDK8 and CDC2L6/CDK11. The MED12, MED13, CCNC and CDK8 subunits form a distinct module termed the CDK8 module. Mediator containing the CDK8 module is less active than Mediator lacking this module in supporting transcriptional activation. Individual preparations of the Mediator complex lacking one or more distinct subunits have been variously termed ARC, CRSP, DRIP, PC2, SMCC and TRAP. As to expression, highly expressed in brain (cerebellum), heart (aorta), skeletal muscle, kidney, placenta and peripheral blood leukocytes. Highly expressed in fetal brain.

It is found in the nucleus. Functionally, component of the Mediator complex, a coactivator involved in the regulated transcription of nearly all RNA polymerase II-dependent genes. Mediator functions as a bridge to convey information from gene-specific regulatory proteins to the basal RNA polymerase II transcription machinery. Mediator is recruited to promoters by direct interactions with regulatory proteins and serves as a scaffold for the assembly of a functional preinitiation complex with RNA polymerase II and the general transcription factors. This subunit may specifically regulate transcription of targets of the Wnt signaling pathway and SHH signaling pathway. This Homo sapiens (Human) protein is Mediator of RNA polymerase II transcription subunit 13-like (MED13L).